We begin with the raw amino-acid sequence, 470 residues long: 63 kDa sperm flagellar membrane protein (470 aa).

The first 25 residues, 1–25 (MFCHLHCMLVVFSLLLTLTGSFVNA), serve as a signal peptide directing secretion. The region spanning 41-80 (PPDPCASNPCTIASTHCVAAGESHTCECRPGYFETNGNCT) is the EGF-like 1 domain. Intrachain disulfides connect Cys-45-Cys-57, Cys-50-Cys-66, and Cys-68-Cys-79. 3 N-linked (GlcNAc...) asparagine glycosylation sites follow: Asn-78, Asn-170, and Asn-219. One can recognise an SEA domain in the interval 81 to 205 (VAQQFAGSFS…STITVSDFDE (125 aa)). An EGF-like 2; calcium-binding domain is found at 202–250 (DFDECASADDNDCDPNANCTNTAGSFTCECDTELYDNSPNTEEPGRVCI). Intrachain disulfides connect Cys-206-Cys-220, Cys-214-Cys-229, Cys-231-Cys-249, Cys-253-Cys-265, Cys-258-Cys-277, and Cys-279-Cys-291. The EGF-like 3 domain maps to 249–292 (CIAPCDPGLCTRPNEICNNGGTIEDDNLCKCIEGYDYTQYGDCD). Asn-322 carries N-linked (GlcNAc...) asparagine glycosylation. Residue Gly-446 is the site of GPI-anchor amidated glycine attachment. Positions 447–470 (SQRHLPVCGVLSLVVTTLLALMLH) are cleaved as a propeptide — removed in mature form.

As to expression, sperm.

The protein localises to the cell projection. It localises to the cilium. The protein resides in the flagellum membrane. This is 63 kDa sperm flagellar membrane protein from Strongylocentrotus purpuratus (Purple sea urchin).